The sequence spans 404 residues: Putative aspartate aminotransferase, cytoplasmic 2 (404 aa).

Lys-249 carries the N6-(pyridoxal phosphate)lysine modification.

The protein belongs to the class-I pyridoxal-phosphate-dependent aminotransferase family. In terms of assembly, homodimer. Pyridoxal 5'-phosphate serves as cofactor.

It localises to the cytoplasm. The catalysed reaction is L-aspartate + 2-oxoglutarate = oxaloacetate + L-glutamate. The polypeptide is Putative aspartate aminotransferase, cytoplasmic 2 (Got1l1) (Mus musculus (Mouse)).